The following is a 301-amino-acid chain: HPr kinase/phosphorylase (301 aa).

Active-site residues include histidine 134 and lysine 155. Residue 149–156 participates in ATP binding; the sequence is GKSGLGKS. Residue serine 156 coordinates Mg(2+). Catalysis depends on aspartate 173, which acts as the Proton acceptor; for phosphorylation activity. Proton donor; for dephosphorylation activity. Residues 196 to 205 are important for the catalytic mechanism of both phosphorylation and dephosphorylation; the sequence is LEVRGLGIIN. Mg(2+) is bound at residue glutamate 197. The active site involves arginine 239. An important for the catalytic mechanism of dephosphorylation region spans residues 260-265; sequence PITPGK.

Belongs to the HPrK/P family. Homohexamer. The cofactor is Mg(2+).

The enzyme catalyses [HPr protein]-L-serine + ATP = [HPr protein]-O-phospho-L-serine + ADP + H(+). It catalyses the reaction [HPr protein]-O-phospho-L-serine + phosphate + H(+) = [HPr protein]-L-serine + diphosphate. Catalyzes the ATP- as well as the pyrophosphate-dependent phosphorylation of a specific serine residue in HPr, a phosphocarrier protein of the phosphoenolpyruvate-dependent sugar phosphotransferase system (PTS). HprK/P also catalyzes the pyrophosphate-producing, inorganic phosphate-dependent dephosphorylation (phosphorolysis) of seryl-phosphorylated HPr (P-Ser-HPr). The two antagonistic activities of HprK/P are regulated by several intracellular metabolites, which change their concentration in response to the absence or presence of rapidly metabolisable carbon sources (glucose, fructose, etc.) in the growth medium. Therefore, by controlling the phosphorylation state of HPr, HPrK/P is a sensor enzyme that plays a major role in the regulation of carbon metabolism and sugar transport: it mediates carbon catabolite repression (CCR), and regulates PTS-catalyzed carbohydrate uptake and inducer exclusion. The chain is HPr kinase/phosphorylase from Malacoplasma penetrans (strain HF-2) (Mycoplasma penetrans).